We begin with the raw amino-acid sequence, 198 residues long: Segregation and condensation protein B (198 aa).

A disordered region spans residues 168-198 (KLADPATDEPDQNEMDLFFDRFNQSKEQEEE).

Belongs to the ScpB family. In terms of assembly, homodimer. Homodimerization may be required to stabilize the binding of ScpA to the Smc head domains. Component of a cohesin-like complex composed of ScpA, ScpB and the Smc homodimer, in which ScpA and ScpB bind to the head domain of Smc. The presence of the three proteins is required for the association of the complex with DNA.

It is found in the cytoplasm. Participates in chromosomal partition during cell division. May act via the formation of a condensin-like complex containing Smc and ScpA that pull DNA away from mid-cell into both cell halves. This Listeria monocytogenes serotype 4b (strain CLIP80459) protein is Segregation and condensation protein B.